Reading from the N-terminus, the 300-residue chain is Ribosomal protein bS6--L-glutamate ligase (300 aa).

Positions 104-287 (MQLLARQGID…IAGKMIRWIE (184 aa)) constitute an ATP-grasp domain. ATP is bound by residues K141, 178–179 (EY), D187, and 211–213 (RSN). D248, E260, and N262 together coordinate Mg(2+). Residues D248, E260, and N262 each coordinate Mn(2+).

It belongs to the RimK family. Requires Mg(2+) as cofactor. Mn(2+) is required as a cofactor.

Functionally, an L-glutamate ligase that catalyzes the ATP-dependent post-translational addition of glutamate residues to the C-terminus of ribosomal protein bS6 (RpsF). Is also able to catalyze the synthesis of poly-alpha-glutamate in vitro, via ATP hydrolysis from unprotected glutamate as substrate. The number of glutamate residues added to either RpsF or to poly-alpha-glutamate changes with pH. In Shigella boydii serotype 18 (strain CDC 3083-94 / BS512), this protein is Ribosomal protein bS6--L-glutamate ligase.